We begin with the raw amino-acid sequence, 352 residues long: Protein RecA (352 aa).

65 to 72 (GPESSGKT) lines the ATP pocket.

It belongs to the RecA family.

The protein resides in the cytoplasm. Its function is as follows. Can catalyze the hydrolysis of ATP in the presence of single-stranded DNA, the ATP-dependent uptake of single-stranded DNA by duplex DNA, and the ATP-dependent hybridization of homologous single-stranded DNAs. It interacts with LexA causing its activation and leading to its autocatalytic cleavage. Plays a functional role in the DNA rearrangement associated with the phenotypic switching from a pathogenic smooth to a nonpathogenic rough form in this bacterium. This Pseudomonas tolaasii protein is Protein RecA.